Consider the following 192-residue polypeptide: Ion-translocating oxidoreductase complex subunit A (192 aa).

The next 6 helical transmembrane spans lie at 5 to 25 (ILLI…FLGL), 39 to 59 (VGMG…AYLV), 63 to 83 (ILIP…VIAV), 102 to 122 (LLGI…VALL), 134 to 154 (VVYG…FAAL), and 171 to 191 (SIAL…TGLV).

This sequence belongs to the NqrDE/RnfAE family. The complex is composed of six subunits: RnfA, RnfB, RnfC, RnfD, RnfE and RnfG.

It is found in the cell inner membrane. In terms of biological role, part of a membrane-bound complex that couples electron transfer with translocation of ions across the membrane. This is Ion-translocating oxidoreductase complex subunit A from Haemophilus influenzae (strain ATCC 51907 / DSM 11121 / KW20 / Rd).